The primary structure comprises 315 residues: Transaldolase (315 aa).

Residue K128 is the Schiff-base intermediate with substrate of the active site.

Belongs to the transaldolase family. Type 1 subfamily. Homodimer.

It localises to the cytoplasm. It carries out the reaction D-sedoheptulose 7-phosphate + D-glyceraldehyde 3-phosphate = D-erythrose 4-phosphate + beta-D-fructose 6-phosphate. The protein operates within carbohydrate degradation; pentose phosphate pathway; D-glyceraldehyde 3-phosphate and beta-D-fructose 6-phosphate from D-ribose 5-phosphate and D-xylulose 5-phosphate (non-oxidative stage): step 2/3. Transaldolase is important for the balance of metabolites in the pentose-phosphate pathway. The sequence is that of Transaldolase from Opitutus terrae (strain DSM 11246 / JCM 15787 / PB90-1).